The following is a 43-amino-acid chain: Defensin (43 aa).

3 cysteine pairs are disulfide-bonded: C3-C34, C20-C39, and C24-C41.

The protein localises to the secreted. Antibacterial peptide active against Gram-positive and Gram-negative bacteria. The chain is Defensin from Palomena prasina (Green shield bug).